Reading from the N-terminus, the 299-residue chain is Streptogrisin-B (299 aa).

Residues 1 to 38 (MRIKRTSNRSNAARRVRTTAVLAGLAAVAALAVPTANA) form the signal peptide. The propeptide occupies 39-114 (ETPRTFSANQ…ERTPGKFTKL (76 aa)). The cysteines at positions 128 and 148 are disulfide-linked. Residues histidine 147, aspartate 177, and serine 255 each act as charge relay system in the active site. Residues cysteine 249 and cysteine 276 are joined by a disulfide bond.

The protein belongs to the peptidase S1 family. In terms of assembly, monomer.

It carries out the reaction Hydrolysis of proteins with trypsin-like specificity.. Functionally, has a primary specificity for large aliphatic or aromatic amino acids. The polypeptide is Streptogrisin-B (sprB) (Streptomyces griseus).